The sequence spans 804 residues: Protein translocase subunit SecA (804 aa).

Residues Gln-100, Gly-118 to Thr-122, and Asp-508 each bind ATP.

It belongs to the SecA family. Monomer and homodimer. Part of the essential Sec protein translocation apparatus which comprises SecA, SecYEG and auxiliary proteins SecDF. Other proteins may also be involved.

The protein resides in the cell membrane. It localises to the cytoplasm. The catalysed reaction is ATP + H2O + cellular proteinSide 1 = ADP + phosphate + cellular proteinSide 2.. Part of the Sec protein translocase complex. Interacts with the SecYEG preprotein conducting channel. Has a central role in coupling the hydrolysis of ATP to the transfer of proteins into and across the cell membrane, serving as an ATP-driven molecular motor driving the stepwise translocation of polypeptide chains across the membrane. The polypeptide is Protein translocase subunit SecA (Leuconostoc citreum (strain KM20)).